Consider the following 122-residue polypeptide: Large ribosomal subunit protein uL14c (122 aa).

The protein belongs to the universal ribosomal protein uL14 family. As to quaternary structure, part of the 50S ribosomal subunit.

It localises to the plastid. Its subcellular location is the chloroplast. Its function is as follows. Binds to 23S rRNA. This chain is Large ribosomal subunit protein uL14c, found in Pleurastrum terricola (Filamentous green alga).